The following is an 86-amino-acid chain: RNA-binding protein Hfq (86 aa).

The 60-residue stretch at 9-68 folds into the Sm domain; the sequence is DPYLNTLRKERVPVSIYLVNGIKLQGQIESFDQFVILLKNTVSQMVYKHAISTVVPSRPV. Residues 66-86 form a disordered region; it reads RPVRLPSAGDSEQADAEPGNA.

It belongs to the Hfq family. As to quaternary structure, homohexamer.

Its function is as follows. RNA chaperone that binds small regulatory RNA (sRNAs) and mRNAs to facilitate mRNA translational regulation in response to envelope stress, environmental stress and changes in metabolite concentrations. Also binds with high specificity to tRNAs. In Ectopseudomonas mendocina (strain ymp) (Pseudomonas mendocina), this protein is RNA-binding protein Hfq.